Consider the following 249-residue polypeptide: tRNA pseudouridine synthase A (249 aa).

Residue D53 is the Nucleophile of the active site. Y111 lines the substrate pocket.

It belongs to the tRNA pseudouridine synthase TruA family. As to quaternary structure, homodimer.

The enzyme catalyses uridine(38/39/40) in tRNA = pseudouridine(38/39/40) in tRNA. Its function is as follows. Formation of pseudouridine at positions 38, 39 and 40 in the anticodon stem and loop of transfer RNAs. The polypeptide is tRNA pseudouridine synthase A (Streptococcus pneumoniae (strain Taiwan19F-14)).